The primary structure comprises 359 residues: Holliday junction branch migration complex subunit RuvB (359 aa).

A compositionally biased stretch (basic and acidic residues) spans Met-1–Asn-10. The disordered stretch occupies residues Met-1–Asp-20. The tract at residues His-4–Tyr-188 is large ATPase domain (RuvB-L). ATP is bound by residues Leu-27, Arg-28, Gly-69, Lys-72, Thr-73, Thr-74, Glu-135–Phe-137, Arg-178, Tyr-188, and Arg-225. Position 73 (Thr-73) interacts with Mg(2+). A small ATPAse domain (RuvB-S) region spans residues Thr-189 to Glu-259. The interval Ser-262–Glu-359 is head domain (RuvB-H). 3 residues coordinate DNA: Arg-298, Arg-317, and Arg-322.

The protein belongs to the RuvB family. Homohexamer. Forms an RuvA(8)-RuvB(12)-Holliday junction (HJ) complex. HJ DNA is sandwiched between 2 RuvA tetramers; dsDNA enters through RuvA and exits via RuvB. An RuvB hexamer assembles on each DNA strand where it exits the tetramer. Each RuvB hexamer is contacted by two RuvA subunits (via domain III) on 2 adjacent RuvB subunits; this complex drives branch migration. In the full resolvosome a probable DNA-RuvA(4)-RuvB(12)-RuvC(2) complex forms which resolves the HJ.

It localises to the cytoplasm. It catalyses the reaction ATP + H2O = ADP + phosphate + H(+). Functionally, the RuvA-RuvB-RuvC complex processes Holliday junction (HJ) DNA during genetic recombination and DNA repair, while the RuvA-RuvB complex plays an important role in the rescue of blocked DNA replication forks via replication fork reversal (RFR). RuvA specifically binds to HJ cruciform DNA, conferring on it an open structure. The RuvB hexamer acts as an ATP-dependent pump, pulling dsDNA into and through the RuvAB complex. RuvB forms 2 homohexamers on either side of HJ DNA bound by 1 or 2 RuvA tetramers; 4 subunits per hexamer contact DNA at a time. Coordinated motions by a converter formed by DNA-disengaged RuvB subunits stimulates ATP hydrolysis and nucleotide exchange. Immobilization of the converter enables RuvB to convert the ATP-contained energy into a lever motion, pulling 2 nucleotides of DNA out of the RuvA tetramer per ATP hydrolyzed, thus driving DNA branch migration. The RuvB motors rotate together with the DNA substrate, which together with the progressing nucleotide cycle form the mechanistic basis for DNA recombination by continuous HJ branch migration. Branch migration allows RuvC to scan DNA until it finds its consensus sequence, where it cleaves and resolves cruciform DNA. The polypeptide is Holliday junction branch migration complex subunit RuvB (Granulibacter bethesdensis (strain ATCC BAA-1260 / CGDNIH1)).